The chain runs to 243 residues: uncharacterized protein (243 aa).

A compositionally biased stretch (low complexity) spans 1–18 (MSNSHYNNYQQQQPHSSN). The interval 1 to 30 (MSNSHYNNYQQQQPHSSNGDPEYQHQQMVH) is disordered. An AMMECR1 domain is found at 38 to 232 (GHGMKTVAVP…MHYKEYREYQ (195 aa)).

This is an uncharacterized protein from Drosophila melanogaster (Fruit fly).